A 427-amino-acid polypeptide reads, in one-letter code: Tol-Pal system protein TolB (427 aa).

The N-terminal stretch at 1-23 (MKLLKRLVSVFAIVLAVGSNAFA) is a signal peptide.

Belongs to the TolB family. The Tol-Pal system is composed of five core proteins: the inner membrane proteins TolA, TolQ and TolR, the periplasmic protein TolB and the outer membrane protein Pal. They form a network linking the inner and outer membranes and the peptidoglycan layer.

Its subcellular location is the periplasm. Part of the Tol-Pal system, which plays a role in outer membrane invagination during cell division and is important for maintaining outer membrane integrity. In Haemophilus influenzae (strain 86-028NP), this protein is Tol-Pal system protein TolB.